Consider the following 347-residue polypeptide: D-alanine--D-alanine ligase (347 aa).

Residues 131–333 enclose the ATP-grasp domain; it reads KRVLESAGIA…YPKLIERLVD (203 aa). 161-216 contributes to the ATP binding site; that stretch reads EEKLAYPVFTKPSNMGSSVGISKSENQEELRQALKLAFRYDSRVLVEQGVNAREIE. The Mg(2+) site is built by Asp-287, Glu-300, and Asn-302.

Belongs to the D-alanine--D-alanine ligase family. Requires Mg(2+) as cofactor. It depends on Mn(2+) as a cofactor.

The protein localises to the cytoplasm. It carries out the reaction 2 D-alanine + ATP = D-alanyl-D-alanine + ADP + phosphate + H(+). Its pathway is cell wall biogenesis; peptidoglycan biosynthesis. In terms of biological role, cell wall formation. The polypeptide is D-alanine--D-alanine ligase (Streptococcus pneumoniae serotype 4 (strain ATCC BAA-334 / TIGR4)).